Consider the following 310-residue polypeptide: Hydroxyacylglutathione hydrolase, mitochondrial (310 aa).

Residues H104, H106, D108, H109, H160, and D184 each coordinate Zn(2+). Substrate is bound by residues 193–195 (KFF), 223–225 (HEY), and 299–302 (RKEK). H223 is a Zn(2+) binding site.

It belongs to the metallo-beta-lactamase superfamily. Glyoxalase II family. In terms of assembly, monomer. It depends on Zn(2+) as a cofactor.

It is found in the mitochondrion matrix. It localises to the cytoplasm. It catalyses the reaction an S-(2-hydroxyacyl)glutathione + H2O = a 2-hydroxy carboxylate + glutathione + H(+). The enzyme catalyses (R)-S-lactoylglutathione + H2O = (R)-lactate + glutathione + H(+). Its function is as follows. Thiolesterase that catalyzes the hydrolysis of S-D-lactoyl-glutathione to form glutathione and D-lactic acid. The protein is Hydroxyacylglutathione hydrolase, mitochondrial (HAGH) of Gallus gallus (Chicken).